The sequence spans 173 residues: MDIAIQQPWFKRALGPFYPSRLFDQFFGEGLFEYDLMPFLSSTISPYYRQSLFRTVLDSGVSEVRSDRDKFVIFLDVKHFSPEDLTVKVLQDFVEIHGKHNERQDDHGYISREFHRRYRLPSNVDQSALSCSLSADGMLTFSGPKVPSGVDAGHSERAIPVSREEKPSSAPSS.

The residue at position 1 (Met1) is an N-acetylmethionine. The segment at 1–63 (MDIAIQQPWF…RTVLDSGVSE (63 aa)) is required for complex formation with BFSP1 and BFSP2. Gln6 bears the Deamidated glutamine; partial mark. A Phosphoserine modification is found at Ser45. Deamidated glutamine; partial is present on Gln50. The sHSP domain occupies 52 to 162 (LFRTVLDSGV…GHSERAIPVS (111 aa)). N6-acetyllysine occurs at positions 70 and 99. Position 100 (His100) interacts with Zn(2+). Deamidated asparagine; partial is present on Asn101. Residues Glu102 and His107 each contribute to the Zn(2+) site. At Ser122 the chain carries Phosphoserine. Asn123 carries the deamidated asparagine; partial modification. The disordered stretch occupies residues 144–173 (PKVPSGVDAGHSERAIPVSREEKPSSAPSS). Residues 153 to 167 (GHSERAIPVSREEKP) are compositionally biased toward basic and acidic residues. His154 is a Zn(2+) binding site. A glycan (O-linked (GlcNAc) serine) is linked at Ser162.

The protein belongs to the small heat shock protein (HSP20) family. As to quaternary structure, heteromer composed of three CRYAA and one CRYAB subunits. Inter-subunit bridging via zinc ions enhances stability, which is crucial as there is no protein turn over in the lens. Can also form homodimers and homotetramers (dimers of dimers) which serve as the building blocks of homooligomers. Within homooligomers, the zinc-binding motif is created from residues of 3 different molecules. His-100 and Glu-102 from one molecule are ligands of the zinc ion, and His-107 and His-154 residues from additional molecules complete the site with tetrahedral coordination geometry. Part of a complex required for lens intermediate filament formation composed of BFSP1, BFSP2 and CRYAA. In terms of processing, acetylation at Lys-70 may increase chaperone activity. Undergoes age-dependent proteolytical cleavage at the C-terminus.

The protein localises to the cytoplasm. Its subcellular location is the nucleus. Contributes to the transparency and refractive index of the lens. Acts as a chaperone, preventing aggregation of various proteins under a wide range of stress conditions. Required for the correct formation of lens intermediate filaments as part of a complex composed of BFSP1, BFSP2 and CRYAA. The chain is Alpha-crystallin A chain (CRYAA) from Neovison vison (American mink).